The primary structure comprises 108 residues: Large ribosomal subunit protein bL21 (108 aa).

It belongs to the bacterial ribosomal protein bL21 family. In terms of assembly, part of the 50S ribosomal subunit. Contacts protein L20.

This protein binds to 23S rRNA in the presence of protein L20. The chain is Large ribosomal subunit protein bL21 from Orientia tsutsugamushi (strain Ikeda) (Rickettsia tsutsugamushi).